A 283-amino-acid polypeptide reads, in one-letter code: Bifunctional protein FolD (283 aa).

Residues 165–167, serine 190, and valine 231 contribute to the NADP(+) site; that span reads GRS.

It belongs to the tetrahydrofolate dehydrogenase/cyclohydrolase family. In terms of assembly, homodimer.

It catalyses the reaction (6R)-5,10-methylene-5,6,7,8-tetrahydrofolate + NADP(+) = (6R)-5,10-methenyltetrahydrofolate + NADPH. It carries out the reaction (6R)-5,10-methenyltetrahydrofolate + H2O = (6R)-10-formyltetrahydrofolate + H(+). The protein operates within one-carbon metabolism; tetrahydrofolate interconversion. Functionally, catalyzes the oxidation of 5,10-methylenetetrahydrofolate to 5,10-methenyltetrahydrofolate and then the hydrolysis of 5,10-methenyltetrahydrofolate to 10-formyltetrahydrofolate. The polypeptide is Bifunctional protein FolD (Anoxybacillus flavithermus (strain DSM 21510 / WK1)).